A 145-amino-acid chain; its full sequence is Androgenic gland hormone (145 aa).

An N-terminal signal peptide occupies residues Met-1–Ala-21. 4 cysteine pairs are disulfide-bonded: Cys-33/Cys-122, Cys-42/Cys-59, Cys-44/Cys-140, and Cys-123/Cys-131. A propeptide spans Ser-68 to Ser-112 (c peptide). Asn-132 carries an N-linked (GlcNAc...) asparagine glycan.

As to expression, androgenic gland.

The protein resides in the secreted. Functionally, controls sex differentiation and the formation of male appendages, spermatogenesis, pigmentation, and male specific behavior. The protein is Androgenic gland hormone (AGH) of Porcellio scaber (Common rough woodlouse).